Consider the following 454-residue polypeptide: 3-phosphoshikimate 1-carboxyvinyltransferase (454 aa).

The 3-phosphoshikimate site is built by Lys39, Ser40, and Arg44. Position 39 (Lys39) interacts with phosphoenolpyruvate. Residues Gly112 and Arg140 each coordinate phosphoenolpyruvate. The 3-phosphoshikimate site is built by Ser185, Gln187, Asp333, and Lys360. Residue Gln187 participates in phosphoenolpyruvate binding. Asp333 functions as the Proton acceptor in the catalytic mechanism. Arg364 and Arg405 together coordinate phosphoenolpyruvate.

Belongs to the EPSP synthase family. In terms of assembly, monomer.

It is found in the cytoplasm. The catalysed reaction is 3-phosphoshikimate + phosphoenolpyruvate = 5-O-(1-carboxyvinyl)-3-phosphoshikimate + phosphate. Its pathway is metabolic intermediate biosynthesis; chorismate biosynthesis; chorismate from D-erythrose 4-phosphate and phosphoenolpyruvate: step 6/7. Functionally, catalyzes the transfer of the enolpyruvyl moiety of phosphoenolpyruvate (PEP) to the 5-hydroxyl of shikimate-3-phosphate (S3P) to produce enolpyruvyl shikimate-3-phosphate and inorganic phosphate. The chain is 3-phosphoshikimate 1-carboxyvinyltransferase from Xylella fastidiosa (strain 9a5c).